A 130-amino-acid polypeptide reads, in one-letter code: Large ribosomal subunit protein bL12 (130 aa).

It belongs to the bacterial ribosomal protein bL12 family. As to quaternary structure, homodimer. Part of the ribosomal stalk of the 50S ribosomal subunit. Forms a multimeric L10(L12)X complex, where L10 forms an elongated spine to which 2 to 4 L12 dimers bind in a sequential fashion. Binds GTP-bound translation factors.

Forms part of the ribosomal stalk which helps the ribosome interact with GTP-bound translation factors. Is thus essential for accurate translation. The chain is Large ribosomal subunit protein bL12 from Chlamydia trachomatis serovar L2 (strain ATCC VR-902B / DSM 19102 / 434/Bu).